Here is a 672-residue protein sequence, read N- to C-terminus: Acetoacetyl-CoA synthetase (672 aa).

It belongs to the ATP-dependent AMP-binding enzyme family.

Its subcellular location is the cytoplasm. It localises to the cytosol. The enzyme catalyses acetoacetate + ATP + CoA = acetoacetyl-CoA + AMP + diphosphate. In terms of biological role, converts acetoacetate to acetoacetyl-CoA in the cytosol. Ketone body-utilizing enzyme, responsible for the synthesis of cholesterol and fatty acids. The sequence is that of Acetoacetyl-CoA synthetase (Aacs) from Mus musculus (Mouse).